A 2223-amino-acid chain; its full sequence is MKGHQFKFWIFELREIKNSHYFSDSWTQFNSVGSFIHIFFHQERFIKLFDPRIWSILLSPNSRGSTSNRYFTIKGVILFVVVFLLYRINNRNMVERKNLYLIGLLPIPMNSIGPRNDTLEKPFWSSNINRLIVSLLYLPKGKNISASCFLDPKESTSTWFLPITKKCIMPESNRGSQWWRNWIGKKRDSSCKISNETVAGIEISFKEKDIKYLEFLFVYYMDDPISKDHDWELFDRLSLRRRRNIINLNSGQLFEILVKHWICYLMSAFREKRPIEVEGFFKQQGAGSTIQSNDIEHVSHLFSRNKWAISLQNCAQFHMWQFHQDLVVSWGKNPYESDLLRNVSRENWIWLDNVWLVNNFNKVRNVSSNSQYDSTRSSFVQVTDSSQLKGSSDQSRDRWDSISNADSEYHTLINKREIQQLKERSILRDPSFLQTEEIEELLENPTRSIRSFFSGRCSELHLGSNPTEKPTRDPKLLKKHLVVSFAPSRRSENKEMINIFKIITYLQNSVSIHPISPDPGCDMVPKDEPDMDSSDKISFLNKNSFFYLFNLFHDRNSGGYTLHHDFESEERFQEMADLFTLSITKPDLVYHKGFAFSIDSCGLDQKQFLNEVFNSRDESKKKSLLILPPIFYEENAFFYRRIQKKWVRISCGNYLEDRKQKRVVFASNNKMEAVNKNQYILIRNLIQIQYSTYGYIRNVLNRLFLMNRSDRSFEYGIKRDQIGNDTLNHRTIRKYTINQHLSNLKKSQKKRFDPLIFLSRTERFMNQDPDAYRYKWFNGSKNFQEHLVSEQRSRFQVVFGRLRINKYSIDWSEVIDKKDLSKSLRFFLSKSLLFLSKLLLFVSNSLPFFFVSFGNIPIHRSEIHISELKGPNDQLYNPLLESIGLQIVHLKKLKAFLLNDHDTFQKSKLLINGRTISPFLFNKIPKWMIDSFDTRNNHRNGKTDSYFSMISHDQNNWLNPVKPFHRSSLISSFYKANRLRFLNNPHHFCFYCNKRFPFYMEKARINNYDFTYRQFLDILFIRNKIFALCVGKKKHAFLERDTISPIESQVSNIFIPNDFTIRSDLFVRRTIDSITDISGTPLTEGQIVHFERTFYQPLSDMNLSDSERKNLHQYLNFNSNMGLIYTPCSDKYLPSEKRKKRSLCLKKCVEKGQMYRTFQRDSAFSTLSKWNLFQTYMPWFLTSTGYKYLNFLFFDTFSDLLPILSSSQKFVSIFHDIMHGSYISWRILQKKVCLPQWNLISEISNKCLHNLLLSEEMIHRNNESPLIWTHLGSPNVREFFYSILFLLLVAGYLVRTHLLFVFRASSELQTEFEEVKSLMTPSYMIELRKLLDRYPTSESNFFWLKNLFLVALEQLGDSLEEIWGSASGGNMPLGGGPAYGVKSIRSNKKDFNINLIDLISIIPNPINRITFSRNTRHLSHTSKEIYSLIRKRKRVNGDWIEDKIESWVASSDSIDEEEREFLVQLSTLTTEKRIDQILLSLTHSDRLLKNDSGYQMIEQPGAIYLRYLVDIHKKYLMNYEFNTSCLAERRVFLAHYQTITYSQTSCGANRFHFPSHGKPFSLRLALSLSRGILVIGSIGTGRSYLVKYLATNSYVPFITVFLNKFLDNKLKGFLIDASDDIDIDVSDDIDVSDDIDRDLDTELELLTMMNALTMDMMPEIGQFYITLQFELAKAMSPCIIWIPNIHDLDVNESNYLSLGLLVNYLSRDCERWSTRNILVIASTHIPQKVDPALIAPNKLNTCIKIRRLLIPQQRKHFFTLSYTRGFHLEKKMFHTNGFGSITMGSNVRDLVALNNEVLSISITQKKSIIDTNTIRSALHRQTWDFRSQVRSVQDHGIFFYQIGRAVAQNVLLSNCPIDPISIYMKKKSCNEGDSSLYKWYFELGTSMKKLTILLYLLSCSAGSVAQDLWSLPGPDGKKGITSYGLVENDSNLVHGLLKVEGALVGSSRTEKDCSQFDNDRVTLFLRPELRNPLDMMQNGSCSILDHRFLYEKDKSELEKGEGALDPQQIEEDLFNPIVWAPRIWTPWSFLFYCIERPNSLGFPYWAGSLRGKRIIYDEEDELQENDSEFLQSGTMQYQTRDRSSKEQGFFRISQFIWDPADPLFFLSKDQPFVSVFSHREFFADEEMPKGLLTTQKSTPTSIYKRWFIKNTQEKHFELLINRQRWLRTNSSLSNGSFRSNTLSESYQYLSNLFLSNGTLLDQMTKTLLRKRWLFPDEMKIGFM.

Residue 1576-1583 (GSIGTGRS) participates in ATP binding.

It belongs to the Ycf2 family.

The protein resides in the plastid. The protein localises to the chloroplast stroma. Functionally, probable ATPase of unknown function. Its presence in a non-photosynthetic plant (Epifagus virginiana) and experiments in tobacco indicate that it has an essential function which is probably not related to photosynthesis. The polypeptide is Protein Ycf2 (Silene latifolia (White campion)).